Consider the following 291-residue polypeptide: ATP synthase gamma chain (291 aa).

This sequence belongs to the ATPase gamma chain family. F-type ATPases have 2 components, CF(1) - the catalytic core - and CF(0) - the membrane proton channel. CF(1) has five subunits: alpha(3), beta(3), gamma(1), delta(1), epsilon(1). CF(0) has three main subunits: a, b and c.

It is found in the cell inner membrane. In terms of biological role, produces ATP from ADP in the presence of a proton gradient across the membrane. The gamma chain is believed to be important in regulating ATPase activity and the flow of protons through the CF(0) complex. In Neisseria meningitidis serogroup A / serotype 4A (strain DSM 15465 / Z2491), this protein is ATP synthase gamma chain.